The primary structure comprises 103 residues: Large ribosomal subunit protein bL21 (103 aa).

The protein belongs to the bacterial ribosomal protein bL21 family. In terms of assembly, part of the 50S ribosomal subunit. Contacts protein L20.

Its function is as follows. This protein binds to 23S rRNA in the presence of protein L20. The chain is Large ribosomal subunit protein bL21 from Colwellia psychrerythraea (strain 34H / ATCC BAA-681) (Vibrio psychroerythus).